The sequence spans 263 residues: Proteasome subunit alpha type-1 (263 aa).

M1 carries the N-acetylmethionine modification. S110 is subject to Phosphoserine; alternate. S110 is a glycosylation site (O-linked (GlcNAc) serine; alternate). Residue K115 forms a Glycyl lysine isopeptide (Lys-Gly) (interchain with G-Cter in ubiquitin) linkage. S177 carries the post-translational modification Phosphoserine. K208 is covalently cross-linked (Glycyl lysine isopeptide (Lys-Gly) (interchain with G-Cter in ubiquitin)). Positions 232–263 (FLEGLEERPQRKAQPAQPADEPAEKADEPMEH) are disordered. The segment covering 253 to 263 (PAEKADEPMEH) has biased composition (basic and acidic residues).

Belongs to the peptidase T1A family. In terms of assembly, the 26S proteasome consists of a 20S proteasome core and two 19S regulatory subunits. The 20S proteasome core is a barrel-shaped complex made of 28 subunits that are arranged in four stacked rings. The two outer rings are each formed by seven alpha subunits, and the two inner rings are formed by seven beta subunits. The proteolytic activity is exerted by three beta-subunits PSMB5, PSMB6 and PSMB7. Interacts with NOTCH3. Interacts with ZFAND1.

It is found in the cytoplasm. The protein resides in the nucleus. Its function is as follows. Component of the 20S core proteasome complex involved in the proteolytic degradation of most intracellular proteins. This complex plays numerous essential roles within the cell by associating with different regulatory particles. Associated with two 19S regulatory particles, forms the 26S proteasome and thus participates in the ATP-dependent degradation of ubiquitinated proteins. The 26S proteasome plays a key role in the maintenance of protein homeostasis by removing misfolded or damaged proteins that could impair cellular functions, and by removing proteins whose functions are no longer required. Associated with the PA200 or PA28, the 20S proteasome mediates ubiquitin-independent protein degradation. This type of proteolysis is required in several pathways including spermatogenesis (20S-PA200 complex) or generation of a subset of MHC class I-presented antigenic peptides (20S-PA28 complex). The chain is Proteasome subunit alpha type-1 from Homo sapiens (Human).